Reading from the N-terminus, the 77-residue chain is Teretoxin Tan15.2 (77 aa).

Positions 1–21 (MTRLTVVFLAILVLLPLATSN) are cleaved as a signal peptide. Residues 22-40 (SGADEAPASLSDLLHRTKR) constitute a propeptide that is removed on maturation.

Post-translationally, contains 4 disulfide bonds. In terms of tissue distribution, expressed by the venom duct.

Its subcellular location is the secreted. This is Teretoxin Tan15.2 from Terebra anilis (Auger snail).